Consider the following 212-residue polypeptide: UDP-N-acetylglucosamine transferase subunit ALG13 (212 aa).

It belongs to the glycosyltransferase 28 family. Heterodimer with ALG14 to form a functional enzyme.

Its subcellular location is the endoplasmic reticulum. It carries out the reaction an N-acetyl-alpha-D-glucosaminyl-diphospho-di-trans,poly-cis-dolichol + UDP-N-acetyl-alpha-D-glucosamine = an N,N'-diacetylchitobiosyl-diphospho-di-trans,poly-cis-dolichol + UDP + H(+). Involved in protein N-glycosylation. Essential for the second step of the dolichol-linked oligosaccharide pathway. The polypeptide is UDP-N-acetylglucosamine transferase subunit ALG13 (ALG13) (Debaryomyces hansenii (strain ATCC 36239 / CBS 767 / BCRC 21394 / JCM 1990 / NBRC 0083 / IGC 2968) (Yeast)).